A 64-amino-acid chain; its full sequence is Large ribosomal subunit protein bL35 (64 aa).

Residues 1 to 42 (MPKAKTHSGASKRFRRTGTGKIVRQKANRRHLLEHKPTKRTR) show a composition bias toward basic residues. The interval 1 to 64 (MPKAKTHSGA…NSRINKLLNG (64 aa)) is disordered. The span at 48 to 58 (TTVSAADNSRI) shows a compositional bias: polar residues.

The protein belongs to the bacterial ribosomal protein bL35 family.

The chain is Large ribosomal subunit protein bL35 from Mycolicibacterium smegmatis (strain ATCC 700084 / mc(2)155) (Mycobacterium smegmatis).